The following is a 184-amino-acid chain: Thymidine kinase (184 aa).

ATP contacts are provided by residues 10–17 (GPMYSGKT) and 83–86 (DEVQ). The Proton acceptor role is filled by E84. Residues C140, C143, C173, and C176 each coordinate Zn(2+).

Belongs to the thymidine kinase family. Homotetramer.

The protein resides in the cytoplasm. It carries out the reaction thymidine + ATP = dTMP + ADP + H(+). The chain is Thymidine kinase from Thermotoga petrophila (strain ATCC BAA-488 / DSM 13995 / JCM 10881 / RKU-1).